Here is a 595-residue protein sequence, read N- to C-terminus: L-fucose isomerase (595 aa).

Residues Glu-341 and Asp-365 each act as proton acceptor in the active site. Mn(2+) contacts are provided by Glu-341, Asp-365, and His-531.

It belongs to the L-fucose isomerase family. It depends on Mn(2+) as a cofactor.

The protein resides in the cytoplasm. The catalysed reaction is L-fucose = L-fuculose. Its pathway is carbohydrate degradation; L-fucose degradation; L-lactaldehyde and glycerone phosphate from L-fucose: step 1/3. Converts the aldose L-fucose into the corresponding ketose L-fuculose. In Clostridium perfringens (strain 13 / Type A), this protein is L-fucose isomerase.